The sequence spans 474 residues: Calcitonin receptor (474 aa).

The first 24 residues, 1–24 (MRFTFTSRCLALFLLLNHPTPILP), serve as a signal peptide directing secretion. At 25–146 (AFSNQTYPTI…FTPEKLKNAY (122 aa)) the chain is on the extracellular side. N-linked (GlcNAc...) asparagine glycosylation is found at N28, N73, N125, and N130. Intrachain disulfides connect C55-C81, C72-C112, and C95-C134. A helical membrane pass occupies residues 147–169 (VLYYLAIVGHSLSIFTLVISLGI). Topologically, residues 170 to 181 (FVFFRSLGCQRV) are cytoplasmic. Residues 182 to 202 (TLHKNMFLTYILNSMIIIIHL) traverse the membrane as a helical segment. Over 203 to 219 (VEVVPNGELVRRDPVSC) the chain is Extracellular. Cysteines 219 and 289 form a disulfide. The chain crosses the membrane as a helical span at residues 220–242 (KILHFFHQYMMACNYFWMLCEGI). At 243–259 (YLHTLIVVAVFTEKQRL) the chain is on the cytoplasmic side. The helical transmembrane segment at 260–280 (RWYYLLGWGFPLVPTTIHAIT) threads the bilayer. Topologically, residues 281–296 (RAVYFNDNCWLSVETH) are extracellular. A helical membrane pass occupies residues 297 to 320 (LLYIIHGPVMAALVVNFFFLLNIV). Topologically, residues 321 to 340 (RVLVTKMRETHEAESHMYLK) are cytoplasmic. A helical transmembrane segment spans residues 341–359 (AVKATMILVPLLGIQFVVF). Over 360-367 (PWRPSNKM) the chain is Extracellular. A helical membrane pass occupies residues 368 to 394 (LGKIYDYVMHSLIHFQGFFVATIYCFC). The Cytoplasmic portion of the chain corresponds to 395-474 (NNEVQTTVKR…LNIIEQESSA (80 aa)).

The protein belongs to the G-protein coupled receptor 2 family. In terms of assembly, heterodimer of CALCR and RAMP1, RAMP2 or RAMP3; the receptor complexes function as AMYR1, AMYR2 and AMYR3 receptors, respectively, and respond to amylin/IAPP, calcitonin/CT and CGRP1 ligands. Interacts with GPRASP2.

Its subcellular location is the cell membrane. With respect to regulation, sensitive to cholera toxin. G protein-coupled receptor activated by ligand peptides amylin (IAPP), calcitonin (CT/CALCA) and calcitonin gene-related peptide type 1 (CGRP1/CALCA). CALCR interacts with receptor-activity-modifying proteins RAMP1, 2 and 3 to form receptor complexes AMYR1, 2 and 3, respectively. IAPP, CT and CGRP1 activate CALCR and AMYRs with distinct modes of receptor activation resulting in specific phenotypes. Ligand binding causes a conformation change that triggers signaling via guanine nucleotide-binding proteins (G proteins) and modulates the activity of downstream effectors. Activates cAMP-dependent pathway. In terms of biological role, non-functional protein. Unable to couple to G proteins and activate adenylyl cyclase. Does not undergo receptor internalization following ligand binding. The sequence is that of Calcitonin receptor from Homo sapiens (Human).